Consider the following 551-residue polypeptide: Solute carrier family 22 member 27 (551 aa).

Residues 1–15 lie on the Cytoplasmic side of the membrane; the sequence is MSFQELLNQVGSLGR. Residues 16–36 form a helical membrane-spanning segment; it reads FQILQIVFLLLLNAIVVPHIA. The Extracellular segment spans residues 37–145; it reads MENFTAAIPN…DLVCESQALN (109 aa). Residues Asn-39, Asn-56, Asn-62, Asn-102, and Asn-107 are each glycosylated (N-linked (GlcNAc...) asparagine). Residues 146–166 traverse the membrane as a helical segment; it reads SVTKFSFMIGLFIGGIICGHL. Residues 167-173 are Cytoplasmic-facing; sequence SDRLGRK. Residues 174–194 traverse the membrane as a helical segment; sequence FILTCALLQFAITETCVAFAP. Residues 195 to 203 lie on the Extracellular side of the membrane; it reads SFFIYCSLR. The chain crosses the membrane as a helical span at residues 204-224; it reads FLAGLSVEPILVNSHLLMLEW. Over 225 to 234 the chain is Cytoplasmic; it reads TSPKFLTMMA. Residues 235-255 traverse the membrane as a helical segment; it reads ALLSCAPNIGYMISAGLAFLF. The Extracellular segment spans residues 256–258; sequence RIW. The helical transmembrane segment at 259–279 threads the bilayer; the sequence is HHLQLTMSVPIFFFLILTRWL. The Cytoplasmic portion of the chain corresponds to 280–348; that stretch reads SESARWLIVT…LFHTSILRKR (69 aa). A helical membrane pass occupies residues 349-369; sequence ICVLSFMRLFFTVSIFGLAVH. Residues 370 to 376 lie on the Extracellular side of the membrane; that stretch reads LQHLSSN. A helical transmembrane segment spans residues 377 to 397; that stretch reads IILLQFLISALAILVSVIGPF. Over 398-405 the chain is Cytoplasmic; it reads VLNHIGRR. A helical transmembrane segment spans residues 406-426; it reads ITYLVLMSLRGIFILIAVFVP. At 427 to 432 the chain is on the extracellular side; it reads QEMQTL. The helical transmembrane segment at 433-453 threads the bilayer; that stretch reads RIIMATLAEGISSLCVGVSRL. The Cytoplasmic segment spans residues 454-467; that stretch reads HTNELLPTTLRATA. Residues 468 to 488 form a helical membrane-spanning segment; it reads VGVIGFFGNSGSFLSPLFMLL. Topologically, residues 489 to 494 are extracellular; the sequence is ATYYAN. A helical transmembrane segment spans residues 495 to 515; that stretch reads MPWIFYGGFSIFNAFTVFLLP. At 516–551 the chain is on the cytoplasmic side; sequence ETKNQPLPDSTHDVGNDWKESRKGKKEDPIIKVTRF. A disordered region spans residues 523–551; it reads PDSTHDVGNDWKESRKGKKEDPIIKVTRF. Residues 525–545 show a composition bias toward basic and acidic residues; that stretch reads STHDVGNDWKESRKGKKEDPI.

Belongs to the major facilitator (TC 2.A.1) superfamily. Organic cation transporter (TC 2.A.1.19) family. Expressed in proximal kidney tubules, and in liver hepatocytes (at protein level).

The protein localises to the cell membrane. Its function is as follows. Does not appear to have transporter activity. In terms of biological role, sodium-independent organic anion transporter which exhibits high specificity for L-carnitine. Can also transport salicylic acid and the drug cimetidine. This chain is Solute carrier family 22 member 27, found in Mus musculus (Mouse).